We begin with the raw amino-acid sequence, 337 residues long: Endochitinase 37 (337 aa).

The N-terminal stretch at 1–25 (MTRLLDASFLLLPVIASTLFGTASA) is a signal peptide. In terms of domain architecture, GH18 spans 38–337 (KVLQGYWENW…GSKNWTFGDN (300 aa)). Glutamate 160 functions as the Proton donor in the catalytic mechanism. Residue asparagine 331 is glycosylated (N-linked (GlcNAc...) asparagine).

Belongs to the glycosyl hydrolase 18 family. Chitinase class V subfamily. As to quaternary structure, monomer.

Its subcellular location is the secreted. The enzyme catalyses Random endo-hydrolysis of N-acetyl-beta-D-glucosaminide (1-&gt;4)-beta-linkages in chitin and chitodextrins.. Secreted chitinase involved in the degradation of chitin, a component of the cell walls of fungi and exoskeletal elements of some animals (including worms and arthropods). Plays a morphogenetic role during apical growth, cell division and differentiation (cell wall morphogenesis). May be involved in the degradation and further assimilation of phytopathogenic fungi, namely mycoparasitism, the major mechanism accounting for the antagonistic activity against phytopathogenic fungi displayed by Trichoderma. In Trichoderma harzianum (Hypocrea lixii), this protein is Endochitinase 37 (chit37).